A 114-amino-acid chain; its full sequence is U-myrmeciitoxin(01)-Mg8a (114 aa).

A signal peptide spans methionine 1–serine 20. Residues threonine 21–proline 44 constitute a propeptide that is removed on maturation.

This sequence belongs to the formicidae venom precursor-01 superfamily. In terms of tissue distribution, expressed by the venom gland.

Its subcellular location is the secreted. Functionally, may have antimicrobial properties, like most ant linear peptides. The polypeptide is U-myrmeciitoxin(01)-Mg8a (Myrmecia gulosa (Red bulldog ant)).